The sequence spans 398 residues: Argininosuccinate synthase (398 aa).

ATP contacts are provided by residues 9 to 17 (AYSGGVDTS) and Ala-37. Tyr-88 is a binding site for L-citrulline. Residue Gly-118 participates in ATP binding. Thr-120, Asn-124, and Asp-125 together coordinate L-aspartate. Position 124 (Asn-124) interacts with L-citrulline. Residues Arg-128, Ser-176, Ser-185, Glu-261, and Tyr-273 each contribute to the L-citrulline site.

Belongs to the argininosuccinate synthase family. Type 1 subfamily. As to quaternary structure, homotetramer.

The protein resides in the cytoplasm. The enzyme catalyses L-citrulline + L-aspartate + ATP = 2-(N(omega)-L-arginino)succinate + AMP + diphosphate + H(+). Its pathway is amino-acid biosynthesis; L-arginine biosynthesis; L-arginine from L-ornithine and carbamoyl phosphate: step 2/3. This is Argininosuccinate synthase from Gloeobacter violaceus (strain ATCC 29082 / PCC 7421).